The following is a 540-amino-acid chain: Sensory neuron membrane protein 1 (540 aa).

At 1 to 105 (MRTDDPVIGN…WIFRPDLSKP (105 aa)) the chain is on the cytoplasmic side. A helical membrane pass occupies residues 106–126 (LTGDEMITIPHPLILGALLMV). The Extracellular segment spans residues 127–436 (QRDREAMMPL…YTLFLGLRFN (310 aa)). 2 N-linked (GlcNAc...) asparagine glycosylation sites follow: N193 and N206. 3 cysteine pairs are disulfide-bonded: C245–C310, C274–C330, and C312–C319. N418 is a glycosylation site (N-linked (GlcNAc...) asparagine). A helical membrane pass occupies residues 437–457 (TAVKWLTIIIGTIGTIVGGFM). The Cytoplasmic segment spans residues 458 to 540 (HYKRTTKMVN…VTVTEMQERY (83 aa)).

The protein belongs to the CD36 family.

The protein localises to the cell membrane. In terms of biological role, plays an olfactory role that is not restricted to pheromone sensitivity. The chain is Sensory neuron membrane protein 1 from Aedes aegypti (Yellowfever mosquito).